We begin with the raw amino-acid sequence, 239 residues long: 7-cyano-7-deazaguanine synthase (239 aa).

ATP is bound at residue Phe-12–Leu-22. Positions 200, 215, 218, and 221 each coordinate Zn(2+).

The protein belongs to the QueC family. Zn(2+) serves as cofactor.

The catalysed reaction is 7-carboxy-7-deazaguanine + NH4(+) + ATP = 7-cyano-7-deazaguanine + ADP + phosphate + H2O + H(+). Its pathway is purine metabolism; 7-cyano-7-deazaguanine biosynthesis. Catalyzes the ATP-dependent conversion of 7-carboxy-7-deazaguanine (CDG) to 7-cyano-7-deazaguanine (preQ(0)). In Hyphomonas neptunium (strain ATCC 15444), this protein is 7-cyano-7-deazaguanine synthase.